The sequence spans 662 residues: Primary amine oxidase 2 (662 aa).

Residues 1-22 (MSQLLLFTILVFSSVFVIGSLS) form the signal peptide. Asn-154 is a glycosylation site (N-linked (GlcNAc...) asparagine). 321–332 (FFDCGEFGCGQY) lines the substrate pocket. Asp-323 acts as the Proton acceptor in catalysis. Residues Cys-342 and Cys-368 are joined by a disulfide bond. 405 to 410 (VGNYDY) is a binding site for substrate. The active-site Schiff-base intermediate with substrate; via topaquinone is the Tyr-408. At Tyr-408 the chain carries 2',4',5'-topaquinone. Cu cation contacts are provided by His-464 and His-466. Mn(2+) contacts are provided by Asp-473 and Asp-475. A glycan (N-linked (GlcNAc...) asparagine) is linked at Asn-568. The Mn(2+) site is built by Asp-602 and Ile-603. Residue His-613 coordinates Cu cation.

It belongs to the copper/topaquinone oxidase family. In terms of assembly, homodimer. Cu cation is required as a cofactor. Requires Mn(2+) as cofactor. It depends on L-topaquinone as a cofactor. Post-translationally, topaquinone (TPQ) is generated by copper-dependent autoxidation of a specific tyrosyl residue.

It carries out the reaction a primary methyl amine + O2 + H2O = an aldehyde + H2O2 + NH4(+). This chain is Primary amine oxidase 2, found in Arabidopsis thaliana (Mouse-ear cress).